The primary structure comprises 662 residues: MSTSNAQSGRAAAIARRNAQVKGKGYTASAAPAAPRKPAAPVAEPVVAAAPAPSQPSRSRRKVSVAPTATPAASAAGREAAKLKRQQQKNGKSSAGAANAMPHPKAKAKQKPEEPIVEPRQAKAEKPTKRSERRTGVKPQVASQQPSGRLQSKAYRKAQAKGKAGQEAFKSNGSSQSGAKAKLANPDASTREIAQQVRAERCAQGKTCSTGGSRPMRKRRNAKEAPQKVGESQTLHGQSVSGTQVGQGEKKMTGSESGACQLVSGTEYLGAEEFSKNCDVQPTPQPAKVTQTQTTRGQVVSGSTKVGRSDKMTGNETGTCSAITGTEYLPADQSKMYCGETPAKSKATGFSVMSQATQKSEQKVTGGDSRKSQSTTFKPKNPASAPHKVMPSQTAKGNTTTGSQVGRLESVTGGERGSCHAVTGTGYQGAEEAKACDMPMTETADKVTASGTAGGQKVTGDRSGAYYGMTGAEAGDCKTITGTSYTGTEQFQFCSVDEQNEMKVRQRKGANPSISGVQPGPQGLTGAQKGACELVTGSHYQGGDQTAMVCDSTNAAAPGESDFPAMIGQAQPAFSTNEVEPMVDEGSKITGDGWDRGSKVTGTDGPWAAQRNASIRGVAGQSPMGASQYRPVNNEVPMSPITGSSGNTDTGAKVTLSGGARA.

The tract at residues 1 to 227 (MSTSNAQSGR…KRRNAKEAPQ (227 aa)) is N-terminal domain. Disordered regions lie at residues 1–258 (MSTS…SESG), 277–322 (NCDV…TCSA), and 342–419 (PAKS…RGSC). The stretch at 8–27 (SGRAAAIARRNAQVKGKGYT) is one N-repeat 1 repeat. 2 stretches are compositionally biased toward low complexity: residues 28 to 57 (ASAA…SQPS) and 64 to 76 (SVAP…ASAA). An N-repeat 2 repeat occupies 58–72 (RSRRKVSVAPTATPA). Residues 120–135 (RQAKAEKPTKRSERRT) are compositionally biased toward basic and acidic residues. Polar residues predominate over residues 141–150 (VASQQPSGRL). The N-repeat 3 repeat unit spans residues 147–168 (SGRLQSKAYRKAQAKGKAGQEA). Composition is skewed to low complexity over residues 161 to 170 (KGKAGQEAFK), 237 to 247 (GQSVSGTQVGQ), and 289 to 300 (VTQTQTTRGQVV). M-repeat repeat units lie at residues 228–278 (KVGE…SKNC), 288–338 (KVTQ…KMYC), 388–436 (KVMP…AKAC), 446–491 (KVTA…TEQF), and 496–550 (VDEQ…AMVC). Residues 228–559 (KVGESQTLHG…CDSTNAAAPG (332 aa)) are middle region. Polar residues predominate over residues 391 to 404 (PSQTAKGNTTTGSQ). A C-terminal domain region spans residues 560–631 (ESDFPAMIGQ…SPMGASQYRP (72 aa)). Residues 564–572 (PAMIGQAQP) form a C-repeat 1 repeat. Disordered stretches follow at residues 588-607 (KITG…DGPW) and 619-662 (AGQS…GARA). Positions 632–662 (VNNEVPMSPITGSSGNTDTGAKVTLSGGARA) are C-terminal peptide. The span at 641 to 650 (ITGSSGNTDT) shows a compositional bias: polar residues.

Belongs to the CsoS2 family. As to quaternary structure, interacts via its N-terminal repeats with RuBisCO. Interacts with the major shell protein CsoS1. Unlike H.neapolitanus and predictions for P.marinus strain MIT 9313, this protein is not thought to have ribosomal frameshifting.

The protein localises to the carboxysome. Required for alpha-carboxysome (Cb) assembly, mediates interaction between RuBisCO and the Cb shell. The protein is probably intrinsically disordered. The C-terminal repeats act as the encapsulation signal to target proteins to the Cb; they are necessary and sufficient to target both CsoS2 and foreign proteins to the Cb. The N-terminal repeats of this protein bind simultaneously to both subunits of RuBisCO. Probably also interacts with the major shell proteins (CsoS1); that interaction would increase the local concentration of CsoS2 so that it can condense RuBisCO and full carboxysomes can be formed. This is Carboxysome assembly protein CsoS2 from Hydrogenovibrio crunogenus (strain DSM 25203 / XCL-2) (Thiomicrospira crunogena).